A 512-amino-acid polypeptide reads, in one-letter code: Cobyric acid synthase (512 aa).

In terms of domain architecture, GATase cobBQ-type spans 262–442; it reads WLRVAAIRLP…WHGLLETDRF (181 aa). The active-site Nucleophile is the C343. H434 is an active-site residue.

This sequence belongs to the CobB/CobQ family. CobQ subfamily.

The protein operates within cofactor biosynthesis; adenosylcobalamin biosynthesis. Catalyzes amidations at positions B, D, E, and G on adenosylcobyrinic A,C-diamide. NH(2) groups are provided by glutamine, and one molecule of ATP is hydrogenolyzed for each amidation. This Rhodococcus jostii (strain RHA1) protein is Cobyric acid synthase.